The sequence spans 328 residues: Putative thiosulfate sulfurtransferase mpst-1 (328 aa).

2 Rhodanese domains span residues 22-162 and 202-320; these read NKEG…EVST and KTSE…KKIS. Residue Cys-278 is the Cysteine persulfide intermediate of the active site.

The enzyme catalyses thiosulfate + hydrogen cyanide = thiocyanate + sulfite + 2 H(+). In Caenorhabditis elegans, this protein is Putative thiosulfate sulfurtransferase mpst-1 (mpst-1).